The chain runs to 746 residues: Hyperosmolality-gated Ca2+ permeable channel 2.1 (746 aa).

Helical transmembrane passes span 3-23 (ISALLTSAGINISICIVLLSL), 90-110 (MVIFSIRIFFIVAVICIAFVL), 144-164 (LWVHCLALYIITSAACLLLYF), 357-377 (IATLVGAVAFMFVFLIPVTFI), 405-425 (VITGYLPSVILILFFYAVPPL), 445-465 (ACIKVLYFTIWNVFFVNILSG), 492-512 (AGFFMTYCFTSGWASLACEIM), 560-580 (VIAPLILPFLLIYFFLAYLIY), 601-621 (IFHNTTIFSLILTQIIALGFF), and 623-643 (LKLSTVASGFTIPLILLTLLF). Over residues 692–702 (LHSQKSSSKAE) the composition is skewed to polar residues. The segment at 692–723 (LHSQKSSSKAECSNPFKKQELPDPEKLKPEEG) is disordered. The segment covering 708–723 (KKQELPDPEKLKPEEG) has biased composition (basic and acidic residues).

Belongs to the CSC1 (TC 1.A.17) family.

The protein resides in the membrane. Functionally, acts as an osmosensitive calcium-permeable cation channel. The polypeptide is Hyperosmolality-gated Ca2+ permeable channel 2.1 (Arabidopsis thaliana (Mouse-ear cress)).